We begin with the raw amino-acid sequence, 495 residues long: Omega-crystallin (495 aa).

It belongs to the aldehyde dehydrogenase family. Lens.

Its function is as follows. Omega-crystallins are structural components of squids and octopi eye lens. Contains relatively little if any DHAL activity. The sequence is that of Omega-crystallin from Nototodarus sloanii (Wellington flying squid).